Consider the following 98-residue polypeptide: NADH-ubiquinone oxidoreductase chain 4L (98 aa).

A run of 3 helical transmembrane segments spans residues 1–21 (MPSI…GMLI), 29–49 (SLLC…LTAL), and 61–81 (IVLL…LVMV).

The protein belongs to the complex I subunit 4L family. Core subunit of respiratory chain NADH dehydrogenase (Complex I) which is composed of 45 different subunits.

It localises to the mitochondrion inner membrane. It carries out the reaction a ubiquinone + NADH + 5 H(+)(in) = a ubiquinol + NAD(+) + 4 H(+)(out). Core subunit of the mitochondrial membrane respiratory chain NADH dehydrogenase (Complex I) which catalyzes electron transfer from NADH through the respiratory chain, using ubiquinone as an electron acceptor. Part of the enzyme membrane arm which is embedded in the lipid bilayer and involved in proton translocation. This Lepus europaeus (European hare) protein is NADH-ubiquinone oxidoreductase chain 4L (MT-ND4L).